Consider the following 383-residue polypeptide: Protein arginine N-methyltransferase PRMT10 (383 aa).

The interval 1-23 is disordered; that stretch reads MRSSQNGGAMGGRAAGTGGGGPS. Gly residues predominate over residues 8 to 22; sequence GAMGGRAAGTGGGGP. The 332-residue stretch at 29–360 folds into the SAM-dependent MTase PRMT-type domain; that stretch reads EVDYAQYFCT…KENHRLMEIE (332 aa). Gln45, Arg54, Gly78, Glu100, and Glu129 together coordinate S-adenosyl-L-methionine. Active-site residues include Glu143 and Glu152. The interval 190–230 is dimerization arm; that stretch reads DRKRNDFDGAMADWHNFSDEIKSYYGVDMGVLTKPFAEEQE.

Belongs to the class I-like SAM-binding methyltransferase superfamily. Protein arginine N-methyltransferase family. Ring-like homodimer.

It catalyses the reaction L-arginyl-[protein] + 2 S-adenosyl-L-methionine = N(omega),N(omega)-dimethyl-L-arginyl-[protein] + 2 S-adenosyl-L-homocysteine + 2 H(+). In terms of biological role, methylates (mono and asymmetric dimethylation) the guanidino nitrogens of arginyl residues in some proteins. Essential for regulating flowering time. This Arabidopsis thaliana (Mouse-ear cress) protein is Protein arginine N-methyltransferase PRMT10 (PRMT10).